Reading from the N-terminus, the 78-residue chain is Small ribosomal subunit protein bS20 (78 aa).

It belongs to the bacterial ribosomal protein bS20 family.

Its function is as follows. Binds directly to 16S ribosomal RNA. This chain is Small ribosomal subunit protein bS20, found in Streptococcus thermophilus (strain ATCC BAA-491 / LMD-9).